The following is a 459-amino-acid chain: tRNA modification GTPase MnmE (459 aa).

(6S)-5-formyl-5,6,7,8-tetrahydrofolate is bound by residues Arg24, Glu82, and Lys122. The TrmE-type G domain maps to 219-379 (GIKVVISGAP…LRQHLYFSFK (161 aa)). GTP is bound by residues 229 to 234 (NSGKSS), 248 to 254 (TNFPGTT), and 273 to 276 (DTAG). Residues Ser233 and Thr254 each contribute to the Mg(2+) site. Position 459 (Lys459) interacts with (6S)-5-formyl-5,6,7,8-tetrahydrofolate.

The protein belongs to the TRAFAC class TrmE-Era-EngA-EngB-Septin-like GTPase superfamily. TrmE GTPase family. Homodimer. Heterotetramer of two MnmE and two MnmG subunits. K(+) is required as a cofactor.

Its subcellular location is the cytoplasm. In terms of biological role, exhibits a very high intrinsic GTPase hydrolysis rate. Involved in the addition of a carboxymethylaminomethyl (cmnm) group at the wobble position (U34) of certain tRNAs, forming tRNA-cmnm(5)s(2)U34. The protein is tRNA modification GTPase MnmE of Buchnera aphidicola subsp. Baizongia pistaciae (strain Bp).